We begin with the raw amino-acid sequence, 211 residues long: NADH-quinone oxidoreductase subunit I (211 aa).

The interval 1-27 is disordered; the sequence is MANTDRPALPHKRAVPPSRADSGPRRR. 4Fe-4S ferredoxin-type domains follow at residues 71 to 101 and 117 to 146; these read LNRYPDGLEKCIGCELCAWACPADAIYVEGA and RVYQINYLRCIGCGLCIEACPTRALTMTYD. [4Fe-4S] cluster contacts are provided by Cys81, Cys84, Cys87, Cys91, Cys126, Cys129, Cys132, and Cys136.

The protein belongs to the complex I 23 kDa subunit family. In terms of assembly, NDH-1 is composed of 14 different subunits. Subunits NuoA, H, J, K, L, M, N constitute the membrane sector of the complex. The cofactor is [4Fe-4S] cluster.

It is found in the cell membrane. The enzyme catalyses a quinone + NADH + 5 H(+)(in) = a quinol + NAD(+) + 4 H(+)(out). NDH-1 shuttles electrons from NADH, via FMN and iron-sulfur (Fe-S) centers, to quinones in the respiratory chain. The immediate electron acceptor for the enzyme in this species is believed to be menaquinone. Couples the redox reaction to proton translocation (for every two electrons transferred, four hydrogen ions are translocated across the cytoplasmic membrane), and thus conserves the redox energy in a proton gradient. The chain is NADH-quinone oxidoreductase subunit I from Mycobacterium bovis (strain ATCC BAA-935 / AF2122/97).